An 80-amino-acid polypeptide reads, in one-letter code: Defensin-like protein 13 (80 aa).

The signal sequence occupies residues 1 to 29; the sequence is MAKSATIVTLFFAALVFFAALEAPMVVEA. Position 30 is a pyrrolidone carboxylic acid (Gln-30). Cystine bridges form between Cys-33–Cys-80, Cys-44–Cys-65, Cys-50–Cys-74, and Cys-54–Cys-76.

This sequence belongs to the DEFL family. Forms oligomers in its native state. In terms of tissue distribution, expressed predominantly in siliques and dry seeds.

It is found in the secreted. Its function is as follows. Confers broad-spectrum resistance to pathogens. Possesses antifungal activity sensitive to inorganic cations in vitro. In Arabidopsis thaliana (Mouse-ear cress), this protein is Defensin-like protein 13 (PDF1.1).